We begin with the raw amino-acid sequence, 290 residues long: uncharacterized protein (290 aa).

The protein belongs to the UreD family.

The protein resides in the cytoplasm. Its subcellular location is the nucleus. Probably facilitates nickel incorporation. This is an uncharacterized protein from Schizosaccharomyces pombe (strain 972 / ATCC 24843) (Fission yeast).